Consider the following 413-residue polypeptide: Serine/threonine transporter SstT (413 aa).

Helical transmembrane passes span 11–31, 43–63, 82–102, 141–161, 192–212, 216–236, 298–318, 339–359, and 363–383; these read IANG…VILA, FLGS…VFVL, IIGL…LFSF, ALLT…GITM, IGIF…ALAG, LLMV…PIIV, MGGA…TLGI, ASGV…LFGI, and VAMQ…SAET.

Belongs to the dicarboxylate/amino acid:cation symporter (DAACS) (TC 2.A.23) family.

Its subcellular location is the cell inner membrane. It catalyses the reaction L-serine(in) + Na(+)(in) = L-serine(out) + Na(+)(out). The catalysed reaction is L-threonine(in) + Na(+)(in) = L-threonine(out) + Na(+)(out). Its function is as follows. Involved in the import of serine and threonine into the cell, with the concomitant import of sodium (symport system). This is Serine/threonine transporter SstT from Shewanella frigidimarina (strain NCIMB 400).